The primary structure comprises 609 residues: Elongation factor 4 (609 aa).

The region spanning 11–193 is the tr-type G domain; the sequence is SRIRNFSIIA…QIVEKVPAPS (183 aa). Residues 23–28 and 140–143 each bind GTP; these read DHGKST and NKID.

This sequence belongs to the TRAFAC class translation factor GTPase superfamily. Classic translation factor GTPase family. LepA subfamily.

The protein localises to the cell membrane. The enzyme catalyses GTP + H2O = GDP + phosphate + H(+). Functionally, required for accurate and efficient protein synthesis under certain stress conditions. May act as a fidelity factor of the translation reaction, by catalyzing a one-codon backward translocation of tRNAs on improperly translocated ribosomes. Back-translocation proceeds from a post-translocation (POST) complex to a pre-translocation (PRE) complex, thus giving elongation factor G a second chance to translocate the tRNAs correctly. Binds to ribosomes in a GTP-dependent manner. This chain is Elongation factor 4, found in Halalkalibacterium halodurans (strain ATCC BAA-125 / DSM 18197 / FERM 7344 / JCM 9153 / C-125) (Bacillus halodurans).